Consider the following 204-residue polypeptide: Uridylate kinase (204 aa).

26–31 (GAGKGT) is an ATP binding site. An NMP region spans residues 46 to 76 (SAGDLLRAEQGRAGSQYGELIKNCIKEGQIV). A ribonucleoside 5'-phosphate contacts are provided by residues arginine 52, 74 to 76 (QIV), 104 to 107 (GFPR), and glutamine 111. The tract at residues 141–151 (ERGKTSGRSDD) is LID. Arginine 142 contributes to the ATP binding site. The a ribonucleoside 5'-phosphate site is built by arginine 148 and arginine 159. Residue arginine 187 participates in ATP binding.

This sequence belongs to the adenylate kinase family. UMP-CMP kinase subfamily. Monomer. The cofactor is Mg(2+).

Its subcellular location is the cytoplasm. It localises to the nucleus. The enzyme catalyses UMP + ATP = UDP + ADP. In terms of biological role, catalyzes the phosphorylation of pyrimidine nucleoside monophosphates at the expense of ATP. Plays an important role in de novo pyrimidine nucleotide biosynthesis. Has preference for UMP and dUMP as phosphate acceptors, but can also use CMP, dCMP, AMP, GMP, dGMP and dTMP. ATP and dATP are the best phosphate donors, but can also use GTP, dGTP, dCTP, and dTTP to some degree. The polypeptide is Uridylate kinase (Saccharomyces cerevisiae (strain ATCC 204508 / S288c) (Baker's yeast)).